We begin with the raw amino-acid sequence, 142 residues long: Large ribosomal subunit protein uL23 (142 aa).

The protein belongs to the universal ribosomal protein uL23 family.

In terms of biological role, this protein binds to a specific region on the 26S rRNA. This chain is Large ribosomal subunit protein uL23 (RPL25), found in Cyberlindnera jadinii (Torula yeast).